The primary structure comprises 92 residues: Protein E7 (92 aa).

The segment at 1 to 43 (MHGTRPSLADITLILEEIPEIIDLHCDEQFDSSEEENNHQLTE) is E7 terminal domain. Residues 24-28 (LHCDE) carry the LXCXE motif; interaction with host RB1 and TMEM173/STING motif. A zinc finger lies at 55 to 91 (CCKCGRAVRLVVECGPEDIRDLEQLFLKTLNLVCPHC). The short motif at 73–81 (IRDLEQLFL) is the Nuclear export signal element.

This sequence belongs to the papillomaviridae E7 protein family. In terms of assembly, homodimer. Homooligomer. Interacts with host RB1; this interaction induces dissociation of RB1-E2F1 complex thereby disrupting RB1 activity. Interacts with host EP300; this interaction represses EP300 transcriptional activity. Interacts with protein E2; this interaction inhibits E7 oncogenic activity. Interacts with host TMEM173/STING; this interaction impairs the ability of TMEM173/STING to sense cytosolic DNA and promote the production of type I interferon (IFN-alpha and IFN-beta). In terms of processing, highly phosphorylated.

It is found in the host cytoplasm. Its subcellular location is the host nucleus. Plays a role in viral genome replication by driving entry of quiescent cells into the cell cycle. Stimulation of progression from G1 to S phase allows the virus to efficiently use the cellular DNA replicating machinery to achieve viral genome replication. E7 protein has both transforming and trans-activating activities. Induces the disassembly of the E2F1 transcription factor from RB1, with subsequent transcriptional activation of E2F1-regulated S-phase genes. Interferes with host histone deacetylation mediated by HDAC1 and HDAC2, leading to transcription activation. Also plays a role in the inhibition of both antiviral and antiproliferative functions of host interferon alpha. Interaction with host TMEM173/STING impairs the ability of TMEM173/STING to sense cytosolic DNA and promote the production of type I interferon (IFN-alpha and IFN-beta). The protein is Protein E7 of Homo sapiens (Human).